We begin with the raw amino-acid sequence, 538 residues long: Syncytin-1 (538 aa).

A signal peptide spans 1–20 (MALPYHIFLFTVLLPSFTLT). The Extracellular segment spans residues 21–443 (APPPCRCMTS…NTGPWGLLSQ (423 aa)). Residue N169 is glycosylated (N-linked (GlcNAc...) asparagine). A CXXC motif is present at residues 186–189 (CWIC). Intrachain disulfides connect C186–C189, C186–C405, and C397–C404. N208, N214, N234, N242, and N281 each carry an N-linked (GlcNAc...) asparagine glycan. The fusion peptide stretch occupies residues 320 to 340 (ILPFVIGAGVLGALGTGIGGI). The segment at 380–396 (LQNRRALDLLTAERGGT) is immunosuppression. The CX6CC signature appears at 397-405 (CLFLGEECC). An N-linked (GlcNAc...) asparagine glycan is attached at N409. The chain crosses the membrane as a helical span at residues 444 to 464 (WMPWILPFLGPLAAIILLLLF). Residues 465 to 484 (GPCIFNLLVNFVSSRIEAVK) form an essential for the fusiogenic function region. Over 465–538 (GPCIFNLLVN…LLRPNSAGSS (74 aa)) the chain is Cytoplasmic. Residues 496-538 (KIYRRPLDRPASPRSDVNDIKGTPPEEILTAQPLLRPNSAGSS) form a disordered region.

The protein belongs to the gamma type-C retroviral envelope protein family. HERV class-I W env subfamily. In terms of assembly, the mature envelope protein (Env) consists of a trimer of SU-TM heterodimers attached probably by a labile interchain disulfide bond. Interacts with the C-type lectin CD209/DC-SIGN. Post-translationally, specific enzymatic cleavages in vivo yield mature proteins. Envelope glycoproteins are synthesized as an inactive precursor that is heavily N-glycosylated and processed likely by furin in the Golgi to yield the mature SU and TM proteins. The cleavage site between SU and TM requires the minimal sequence [KR]-X-[KR]-R. The CXXC motif is highly conserved across a broad range of retroviral envelope proteins. It is thought to participate in the formation of a labile disulfide bond possibly with the CX6CC motif present in the transmembrane protein.

The protein resides in the cell membrane. It is found in the virion. Its function is as follows. This endogenous retroviral envelope protein has retained its original fusogenic properties and participates in trophoblast fusion and the formation of a syncytium during placenta morphogenesis. May recognize and induce fusion through binding of SLC1A4 and SLC1A5. Functionally, endogenous envelope proteins may have kept, lost or modified their original function during evolution. Retroviral envelope proteins mediate receptor recognition and membrane fusion during early infection. The surface protein (SU) mediates receptor recognition, while the transmembrane protein (TM) acts as a class I viral fusion protein. The protein may have at least 3 conformational states: pre-fusion native state, pre-hairpin intermediate state, and post-fusion hairpin state. During viral and target cell membrane fusion, the coiled coil regions (heptad repeats) assume a trimer-of-hairpins structure, positioning the fusion peptide in close proximity to the C-terminal region of the ectodomain. The formation of this structure appears to drive apposition and subsequent fusion of membranes. The polypeptide is Syncytin-1 (ERVW-1) (Pan troglodytes (Chimpanzee)).